Reading from the N-terminus, the 373-residue chain is 3 beta-hydroxysteroid dehydrogenase/Delta 5--&gt;4-isomerase type 2 (373 aa).

The Proton acceptor role is filled by Y155. NAD(+) is bound at residue K159. Residues L288–F308 form a helical membrane-spanning segment.

The protein belongs to the 3-beta-HSD family. Adrenal glands, testes and ovaries.

The protein localises to the endoplasmic reticulum membrane. It is found in the mitochondrion membrane. It carries out the reaction a 3beta-hydroxy-Delta(5)-steroid + NAD(+) = a 3-oxo-Delta(5)-steroid + NADH + H(+). It catalyses the reaction a 3-oxo-Delta(5)-steroid = a 3-oxo-Delta(4)-steroid. It participates in lipid metabolism; steroid biosynthesis. 3-beta-HSD is a bifunctional enzyme, that catalyzes the oxidative conversion of Delta(5)-ene-3-beta-hydroxy steroid, and the oxidative conversion of ketosteroids. The 3-beta-HSD enzymatic system plays a crucial role in the biosynthesis of all classes of hormonal steroids. This chain is 3 beta-hydroxysteroid dehydrogenase/Delta 5--&gt;4-isomerase type 2 (Hsd3b), found in Rattus norvegicus (Rat).